The sequence spans 288 residues: MFSTTLINTFSLGLLAVVSVVAAPGGISVGPISIGPGGISLGPGGISIGPGGINLGPGGGPGAINAGPAAVNLGTAGNYAILAKSGISTVPESIISGNIGVSPISTTAFTGFSETLDSTGKFATSQQVVGELFAASFAAPTPTTLTTAVSDMQTAFNDATGRVTPDFTNLGGGELGGLVLTPGLYKWTGAVSVNSTGVTIAGTPLDHFIFQIPATLGFAAASRVTLVGGIPASNIVWAATSVVTAGAGSHIEGVVLAKTAVTLETGATMNGRILAQTFVALQSATVIG.

A signal peptide spans 1 to 22 (MFSTTLINTFSLGLLAVVSVVA). Short sequence motifs (ice-binding site motif (T-A/G-X-T/N)) lie at residues 75–78 (TAGN) and 154–157 (TAFN). An N-linked (GlcNAc...) asparagine glycan is attached at asparagine 194. Short sequence motifs (ice-binding site motif (T-A/G-X-T/N)) lie at residues 196 to 199 (TGVT) and 265 to 268 (TGAT).

The protein belongs to the ice-binding protein family.

The protein resides in the secreted. Binds ice crystals and most probably inhibits their growth in order to prevent cell damage from extracellular ice. This is Ice-binding protein from Lentinula edodes (Shiitake mushroom).